A 606-amino-acid chain; its full sequence is Limonene synthase, chloroplastic (606 aa).

Residues 1–38 constitute a chloroplast transit peptide; the sequence is MAIINLPVPTNSSSEVNKHNHLRSCLPSGRATFTTLSA. 5 residues coordinate (2E)-geranyl diphosphate: arginine 320, aspartate 357, aspartate 361, arginine 497, and aspartate 500. Residues aspartate 357 and aspartate 361 each coordinate Mg(2+). Positions 357–361 match the DDXXD motif motif; sequence DDIYD. Positions 500, 504, and 508 each coordinate Mg(2+).

This sequence belongs to the terpene synthase family. Tpsb subfamily. In terms of assembly, monomer. It depends on Mg(2+) as a cofactor. The cofactor is Mn(2+). Confined to fruits.

The protein localises to the plastid. The protein resides in the chloroplast. The catalysed reaction is (2E,6E)-farnesyl diphosphate = (E)-beta-farnesene + diphosphate. The enzyme catalyses (2E)-geranyl diphosphate = limonene + diphosphate. It catalyses the reaction (2E)-geranyl diphosphate = beta-pinene + diphosphate. It carries out the reaction (2E)-geranyl diphosphate = sabinene + diphosphate. The catalysed reaction is (2E)-geranyl diphosphate = beta-myrcene + diphosphate. The enzyme catalyses (2E)-geranyl diphosphate = alpha-pinene + diphosphate. It catalyses the reaction (2E)-geranyl diphosphate = terpinolene + diphosphate. It functions in the pathway secondary metabolite biosynthesis; terpenoid biosynthesis. Monoterpene synthase (mono-TPS) involved in the biosynthesis of monoterpenes natural products, constituent of coffee beverage aroma. Catalyzes the conversion of (2E)-geranyl diphosphate (GPP) into limonene, beta-pinene, sabinene and beta-myrcene, and, as minor products, alpha-pinene and alpha-terpinolene. Can also, with a low efficiency, use farnesyl pyrophosphate (FPP) as substrate to produce beta-farnesene. Not able to use geranylgeranyl pyrophosphate (GGPP) as substrate. The polypeptide is Limonene synthase, chloroplastic (Coffea arabica (Arabian coffee)).